The following is a 263-amino-acid chain: Glutamate racemase (263 aa).

Residues 12-13 (DS) and 44-45 (YG) contribute to the substrate site. Cys-75 serves as the catalytic Proton donor/acceptor. 76 to 77 (NT) contributes to the substrate binding site. Catalysis depends on Cys-186, which acts as the Proton donor/acceptor. 187–188 (TH) is a substrate binding site.

The protein belongs to the aspartate/glutamate racemases family.

The enzyme catalyses L-glutamate = D-glutamate. Its pathway is cell wall biogenesis; peptidoglycan biosynthesis. Provides the (R)-glutamate required for cell wall biosynthesis. The chain is Glutamate racemase from Ectopseudomonas mendocina (strain ymp) (Pseudomonas mendocina).